Reading from the N-terminus, the 557-residue chain is Formate--tetrahydrofolate ligase 2 (557 aa).

Threonine 66 to threonine 73 provides a ligand contact to ATP.

It belongs to the formate--tetrahydrofolate ligase family.

The catalysed reaction is (6S)-5,6,7,8-tetrahydrofolate + formate + ATP = (6R)-10-formyltetrahydrofolate + ADP + phosphate. It participates in one-carbon metabolism; tetrahydrofolate interconversion. The chain is Formate--tetrahydrofolate ligase 2 from Streptococcus pyogenes serotype M12 (strain MGAS9429).